The following is a 35-amino-acid chain: Photosystem II reaction center protein T (35 aa).

A helical membrane pass occupies residues 3–23; the sequence is ALVYTFLLVSTLGIIFFAIFF.

This sequence belongs to the PsbT family. In terms of assembly, PSII is composed of 1 copy each of membrane proteins PsbA, PsbB, PsbC, PsbD, PsbE, PsbF, PsbH, PsbI, PsbJ, PsbK, PsbL, PsbM, PsbT, PsbY, PsbZ, Psb30/Ycf12, at least 3 peripheral proteins of the oxygen-evolving complex and a large number of cofactors. It forms dimeric complexes.

Its subcellular location is the plastid. It localises to the chloroplast thylakoid membrane. Found at the monomer-monomer interface of the photosystem II (PS II) dimer, plays a role in assembly and dimerization of PSII. PSII is a light-driven water plastoquinone oxidoreductase, using light energy to abstract electrons from H(2)O, generating a proton gradient subsequently used for ATP formation. This Nelumbo lutea (American lotus) protein is Photosystem II reaction center protein T.